A 131-amino-acid chain; its full sequence is Profilin (131 aa).

Belongs to the profilin family. In terms of assembly, occurs in many kinds of cells as a complex with monomeric actin in a 1:1 ratio.

It localises to the cytoplasm. Its subcellular location is the cytoskeleton. Its function is as follows. Binds to actin and affects the structure of the cytoskeleton. At high concentrations, profilin prevents the polymerization of actin, whereas it enhances it at low concentrations. By binding to PIP2, it inhibits the formation of IP3 and DG. In Prunus persica (Peach), this protein is Profilin.